A 304-amino-acid polypeptide reads, in one-letter code: Glutaminase (304 aa).

Substrate-binding residues include Ser-63, Asn-113, Glu-157, Asn-164, Tyr-188, Tyr-240, and Val-258.

Belongs to the glutaminase family. In terms of assembly, homotetramer.

It catalyses the reaction L-glutamine + H2O = L-glutamate + NH4(+). The polypeptide is Glutaminase (Paraburkholderia phytofirmans (strain DSM 17436 / LMG 22146 / PsJN) (Burkholderia phytofirmans)).